We begin with the raw amino-acid sequence, 826 residues long: Ubiquitin carboxyl-terminal hydrolase 16 (826 aa).

The interval 1–23 (MGKKRTKGKSVPEKASSESTEPM) is disordered. A UBP-type zinc finger spans residues 22 to 141 (PMCRHLRKGL…QVVDYVRKQA (120 aa)). C24, H26, C48, C51, C73, C76, C81, H89, H93, H102, C115, and C118 together coordinate Zn(2+). K139 is covalently cross-linked (Glycyl lysine isopeptide (Lys-Gly) (interchain with G-Cter in SUMO2)). The tract at residues 145-184 (TSKPAEKNNGHIELENKKLEKESKNEQEREKSESMAKENI) is disordered. Residues 148-180 (PAEKNNGHIELENKKLEKESKNEQEREKSESMA) show a composition bias toward basic and acidic residues. A Phosphoserine modification is found at S188. One can recognise a USP domain in the interval 195–825 (KGLSNLGNTC…QAYLLFYERI (631 aa)). The active-site Nucleophile is the C204. Residues 392–407 (QSGKKNINDKNVKKTM) show a composition bias toward basic and acidic residues. Disordered regions lie at residues 392-456 (QSGK…RRQQ) and 526-553 (ADER…TSAP). Residues 408–419 (EEEDKDSEEEKD) show a composition bias toward acidic residues. S414 is subject to Phosphoserine. The segment covering 436-456 (HTQKKAKKQAKKQAKNQRRQQ) has biased composition (basic residues). The span at 526 to 537 (ADERKCPEHPEV) shows a compositional bias: basic and acidic residues. Residues 539-551 (SVSTESDLGSLTS) are compositionally biased toward polar residues. H760 serves as the catalytic Proton acceptor.

Belongs to the peptidase C19 family. USP16 subfamily. As to quaternary structure, homotetramer. Associates with late pre-40S ribosomes. Interacts with CEP78; promoting deubiquitination of tektins. Phosphorylated at the onset of mitosis and dephosphorylated during the metaphase/anaphase transition. Phosphorylation by AURKB enhances the deubiquitinase activity.

The protein localises to the nucleus. The catalysed reaction is Thiol-dependent hydrolysis of ester, thioester, amide, peptide and isopeptide bonds formed by the C-terminal Gly of ubiquitin (a 76-residue protein attached to proteins as an intracellular targeting signal).. Specifically deubiquitinates 'Lys-120' of histone H2A (H2AK119Ub), a specific tag for epigenetic transcriptional repression, thereby acting as a coactivator. Deubiquitination of histone H2A is a prerequisite for subsequent phosphorylation at 'Ser-11' of histone H3 (H3S10ph), and is required for chromosome segregation when cells enter into mitosis. In resting B- and T-lymphocytes, phosphorylation by AURKB leads to enhance its activity, thereby maintaining transcription in resting lymphocytes. Regulates Hox gene expression via histone H2A deubiquitination. Prefers nucleosomal substrates. Does not deubiquitinate histone H2B. Also deubiquitinates non-histone proteins, such as ribosomal protein RPS27A: deubiquitination of monoubiquitinated RPS27A promotes maturation of the 40S ribosomal subunit. Also mediates deubiquitination of tektin proteins (TEKT1, TEKT2, TEK3, TEKT4 and TEKT5), promoting their stability. The sequence is that of Ubiquitin carboxyl-terminal hydrolase 16 (Usp16) from Rattus norvegicus (Rat).